The following is a 256-amino-acid chain: DNA repair protein RecO (256 aa).

The protein belongs to the RecO family.

Its function is as follows. Involved in DNA repair and RecF pathway recombination. The polypeptide is DNA repair protein RecO (Anaeromyxobacter sp. (strain Fw109-5)).